The primary structure comprises 311 residues: Delta-1-pyrroline-5-carboxylate reductase kk1I (311 aa).

A signal peptide spans 1 to 31 (MTKRESNTLAVLGCGMVFLVSLLDLANRLLG). Asn59 carries an N-linked (GlcNAc...) asparagine glycan.

The protein belongs to the pyrroline-5-carboxylate reductase family.

It participates in secondary metabolite biosynthesis. Functionally, delta-1-pyrroline-5-carboxylate reductase; part of the gene cluster that mediates the biosynthesis of KK-1, a novel cyclic depsipeptide with 10 residues which is a promising active compound with high activity against many plant pathogens, especially Botrytis cinerea. Within the pathway, kk1I catalyzes the synthesis of the L-pipecolic acid residue of KK-1 from delta-1-pyrroline-5-carboxylate (P5C), a metabolic intermediate of lysine. The nonribosomal peptide synthetase (NRPS) kk1B catalyzes the elongation and cyclization of the decapeptide chain composed of 1 D-lactic acid residue (D-Lac), 1 pipecolic acid residue (Pip), 1 aspartic acid residue (Asp), 1 isoleucine residue (Ile), 1 glycine residue (Gly), 1 tyrosine residue (Tyr) and 4 valine residues (Val). The Asp, Ile and 3 Val residues are N-methylated by the 5 methyltransferase domains from the NRPS (found in modules 3, 5, 6, 7 and 9), whereas the Tyr residue is O-methylated by the cluster encoded O-methyltransferase kk1A. The thioesterase kk1J is likely to be involved in the corrective mechanism of peptide chain synthesis. The D-lactate dehydrogenase kk1H is involved in the synthesis of D-lactic acid from pyruvic acid, which is recognized by the A domain of the first kk1B module. The pyrroline-5-carboxylate reductase kk1I is involved in the synthesis of the L-pipecolic acid residue of KK-1 from delta-1-pyrroline-5-carboxylate (P5C), a metabolic intermediate of lysine. It still is unclear how kk1C and kk1D are involved in the production of KK-1. This chain is Delta-1-pyrroline-5-carboxylate reductase kk1I, found in Curvularia clavata.